A 582-amino-acid polypeptide reads, in one-letter code: DnaJ protein ERDJ3A (582 aa).

Residues 1 to 25 form the signal peptide; it reads MGIPVRSLLVASIVLSSIALHVAAA. The J domain maps to 29 to 93; sequence DPYKVLGVDK…EKRKNYDLYG (65 aa). Asn61 is a glycosylation site (N-linked (GlcNAc...) asparagine). Positions 178-201 are disordered; it reads GGSQHTGSAGKARRGTKSSGHDSS. Positions 407-437 form a coiled coil; the sequence is VKDLRSGIKELKNLLENFEKKNKKLASNQAK.

As to quaternary structure, interacts with BIP5.

Its subcellular location is the endoplasmic reticulum. The protein resides in the vacuole. Functionally, may play a role in protein folding in the endoplasmic reticulum. The protein is DnaJ protein ERDJ3A of Oryza sativa subsp. japonica (Rice).